A 151-amino-acid chain; its full sequence is FAD synthase (151 aa).

ATP contacts are provided by residues 12–13 (TF), 17–20 (HPGH), Asp-97, and Tyr-125.

It belongs to the archaeal FAD synthase family. Homodimer. Requires a divalent metal cation as cofactor.

The enzyme catalyses FMN + ATP + H(+) = FAD + diphosphate. The protein operates within cofactor biosynthesis; FAD biosynthesis; FAD from FMN: step 1/1. In terms of biological role, catalyzes the transfer of the AMP portion of ATP to flavin mononucleotide (FMN) to produce flavin adenine dinucleotide (FAD) coenzyme. This chain is FAD synthase, found in Methanococcus vannielii (strain ATCC 35089 / DSM 1224 / JCM 13029 / OCM 148 / SB).